An 88-amino-acid polypeptide reads, in one-letter code: Large ribosomal subunit protein bL27 (88 aa).

The interval M1–L21 is disordered.

It belongs to the bacterial ribosomal protein bL27 family.

The polypeptide is Large ribosomal subunit protein bL27 (Mycobacterium ulcerans (strain Agy99)).